We begin with the raw amino-acid sequence, 24 residues long: Defensin D6 (24 aa).

It belongs to the DEFL family. Group IV subfamily. As to expression, distributed in the epidermal cell layer of leaves and in the subepidermal layer region of stems. Not in roots.

The protein resides in the secreted. Its subcellular location is the cell wall. In terms of biological role, antimicrobial peptide. Active against Fusarium spp., Gram-positive and Gram-negative bacterial pathogens. This Spinacia oleracea (Spinach) protein is Defensin D6.